We begin with the raw amino-acid sequence, 262 residues long: Ubiquitin thioesterase otubain-like (262 aa).

One can recognise an OTU domain in the interval 64–262 (KFIRRTRPDG…PGHYDILYPN (199 aa)). Residue Asp72 is part of the active site. Cys75 serves as the catalytic Nucleophile. Ile168 contacts substrate. His255 is a catalytic residue.

Belongs to the peptidase C65 family.

It carries out the reaction Thiol-dependent hydrolysis of ester, thioester, amide, peptide and isopeptide bonds formed by the C-terminal Gly of ubiquitin (a 76-residue protein attached to proteins as an intracellular targeting signal).. Possible hydrolase that can remove conjugated ubiquitin from proteins in vitro and may therefore play an important regulatory role at the level of protein turnover by preventing degradation. This chain is Ubiquitin thioesterase otubain-like, found in Drosophila melanogaster (Fruit fly).